We begin with the raw amino-acid sequence, 743 residues long: GTPase-activating protein gyp7 (743 aa).

In terms of domain architecture, Rab-GAP TBC spans 411 to 633 (GIQPSLRKEV…KLWDVLFTNY (223 aa)).

Its subcellular location is the cytoplasm. It is found in the nucleus. Functionally, most effectively accelerates the intrinsic GTPase activity of ypt7. The protein is GTPase-activating protein gyp7 of Schizosaccharomyces pombe (strain 972 / ATCC 24843) (Fission yeast).